The sequence spans 411 residues: Epoxyqueuosine reductase (411 aa).

Asp171 serves as the catalytic Proton donor. The 4Fe-4S ferredoxin-type domain maps to 213–245 (LPLPVDKPQEEQCGRCVACMTTCPTGAIVAPYT). Residues Cys225, Cys228, Cys231, Cys235, Cys251, Cys278, Cys281, and Cys285 each contribute to the [4Fe-4S] cluster site.

The protein belongs to the QueG family. Monomer. The cofactor is cob(II)alamin. [4Fe-4S] cluster is required as a cofactor.

Its subcellular location is the cytoplasm. It catalyses the reaction epoxyqueuosine(34) in tRNA + AH2 = queuosine(34) in tRNA + A + H2O. It functions in the pathway tRNA modification; tRNA-queuosine biosynthesis. Catalyzes the conversion of epoxyqueuosine (oQ) to queuosine (Q), which is a hypermodified base found in the wobble positions of tRNA(Asp), tRNA(Asn), tRNA(His) and tRNA(Tyr). The protein is Epoxyqueuosine reductase of Yersinia pestis.